A 126-amino-acid chain; its full sequence is Aspartate 1-decarboxylase (126 aa).

Ser-25 serves as the catalytic Schiff-base intermediate with substrate; via pyruvic acid. Ser-25 bears the Pyruvic acid (Ser) mark. Thr-57 is a binding site for substrate. The active-site Proton donor is the Tyr-58. Substrate is bound at residue Gly-73–Ala-75.

It belongs to the PanD family. As to quaternary structure, heterooctamer of four alpha and four beta subunits. It depends on pyruvate as a cofactor. Post-translationally, is synthesized initially as an inactive proenzyme, which is activated by self-cleavage at a specific serine bond to produce a beta-subunit with a hydroxyl group at its C-terminus and an alpha-subunit with a pyruvoyl group at its N-terminus.

It is found in the cytoplasm. The catalysed reaction is L-aspartate + H(+) = beta-alanine + CO2. The protein operates within cofactor biosynthesis; (R)-pantothenate biosynthesis; beta-alanine from L-aspartate: step 1/1. Catalyzes the pyruvoyl-dependent decarboxylation of aspartate to produce beta-alanine. The protein is Aspartate 1-decarboxylase of Alcanivorax borkumensis (strain ATCC 700651 / DSM 11573 / NCIMB 13689 / SK2).